Reading from the N-terminus, the 319-residue chain is ATP-dependent 6-phosphofructokinase (319 aa).

ATP is bound at residue Gly11. 21–25 is an ADP binding site; sequence RAVTR. Residues 72-73 and 102-105 contribute to the ATP site; these read RY and GDGS. Asp103 is a Mg(2+) binding site. 125–127 serves as a coordination point for substrate; it reads TID. Asp127 functions as the Proton acceptor in the catalytic mechanism. Arg154 lines the ADP pocket. Residues Arg162 and 169–171 each bind substrate; that span reads MGR. ADP is bound by residues 185–187 and 213–215; these read GAD and KDH. Residues Glu222, Arg243, and 249 to 252 contribute to the substrate site; that span reads HMQR.

The protein belongs to the phosphofructokinase type A (PFKA) family. ATP-dependent PFK group I subfamily. Prokaryotic clade 'B1' sub-subfamily. Homotetramer. The cofactor is Mg(2+).

The protein localises to the cytoplasm. The catalysed reaction is beta-D-fructose 6-phosphate + ATP = beta-D-fructose 1,6-bisphosphate + ADP + H(+). Its pathway is carbohydrate degradation; glycolysis; D-glyceraldehyde 3-phosphate and glycerone phosphate from D-glucose: step 3/4. Allosterically activated by ADP and other diphosphonucleosides, and allosterically inhibited by phosphoenolpyruvate. The binding affinities for these effectors are decreased however, and therefore the allosteric effect becomes apparent only at high effector concentrations. Functionally, catalyzes the phosphorylation of D-fructose 6-phosphate to fructose 1,6-bisphosphate by ATP, the first committing step of glycolysis. The protein is ATP-dependent 6-phosphofructokinase of Lactobacillus delbrueckii subsp. bulgaricus.